A 647-amino-acid chain; its full sequence is Threonine--tRNA ligase (647 aa).

In terms of domain architecture, TGS spans 1–61 (MINITFPDGA…TEDGSIEIVT (61 aa)). Positions 242–540 (DHRKLGKELD…LIENYKGAFP (299 aa)) are catalytic. 3 residues coordinate Zn(2+): Cys336, His387, and His517.

Belongs to the class-II aminoacyl-tRNA synthetase family. Homodimer. Zn(2+) serves as cofactor.

It localises to the cytoplasm. It catalyses the reaction tRNA(Thr) + L-threonine + ATP = L-threonyl-tRNA(Thr) + AMP + diphosphate + H(+). Functionally, catalyzes the attachment of threonine to tRNA(Thr) in a two-step reaction: L-threonine is first activated by ATP to form Thr-AMP and then transferred to the acceptor end of tRNA(Thr). Also edits incorrectly charged L-seryl-tRNA(Thr). The protein is Threonine--tRNA ligase of Streptococcus pneumoniae (strain JJA).